Here is a 376-residue protein sequence, read N- to C-terminus: Protein STRICTOSIDINE SYNTHASE-LIKE 8 (376 aa).

Residues 1-31 form the signal peptide; it reads MPISRRVLTPITAAPVILAVLCFFFWSSIIG. N-linked (GlcNAc...) asparagine glycans are attached at residues N98, N172, and N224.

This sequence belongs to the strictosidine synthase family.

The protein localises to the vacuole. The sequence is that of Protein STRICTOSIDINE SYNTHASE-LIKE 8 from Arabidopsis thaliana (Mouse-ear cress).